Consider the following 608-residue polypeptide: N(6)-adenosine-methyltransferase MT-A70-like protein (608 aa).

Basic and acidic residues predominate over residues 250 to 265; the sequence is KKKQERRDEKELRPDV. The disordered stretch occupies residues 250–272; the sequence is KKKQERRDEKELRPDVDAGENVT. Residues 395-396 and Asp-413 contribute to the S-adenosyl-L-methionine site; that span reads DL. Residues 414 to 428 form a gate loop 1 region; sequence PPWDIHMELPYGTMS. The segment at 480-497 is interphase loop; the sequence is QLQRIIRTGRTGHWLNHG. The positively charged region required for RNA-binding stretch occupies residues 483-496; the sequence is RIIRTGRTGHWLNH. The segment at 525–533 is gate loop 2; sequence VRATSHKPD. S-adenosyl-L-methionine-binding positions include Lys-531, 554 to 557, and 567 to 568; these read RPHN and NQ.

Belongs to the MT-A70-like family. In terms of assembly, component of the WMM complex, a N6-methyltransferase complex composed of a catalytic subcomplex, named MAC, and of an associated subcomplex, named MACOM. The MAC subcomplex is composed of Ime4/Mettl3 and Mettl14. The MACOM subcomplex is composed of fl(2)d, Flacc/Xio, Hakai, vir, and, in some cases of nito. Expressed in testes. In the ovaries, detected in germaria, prefollicle, follicle and polar cells (at protein levels). Detected in the ooplasm and in the cells of the 16-cell cyst of early stages (at protein levels).

The protein localises to the nucleus. The enzyme catalyses an adenosine in mRNA + S-adenosyl-L-methionine = an N(6)-methyladenosine in mRNA + S-adenosyl-L-homocysteine + H(+). Catalytic component of the WMM complex, a complex that mediates N6-methyladenosine (m6A) methylation of mRNAs, a modification that plays a role in the efficiency of mRNA splicing and is required for sex determination. In the heterodimer formed with Mettl14, constitutes the catalytic core. Required for sex determination and dosage compensation via Sxl alternative splicing: m6A methylation acts as a key regulator of Sxl pre-mRNA and promotes female-specific alternative splicing of Sxl, which determines female physiognomy. M6A methylation is also required for neuronal functions. During oogenesis, required for egg chamber development probably as part of the N/Notch signaling. This is N(6)-adenosine-methyltransferase MT-A70-like protein from Drosophila melanogaster (Fruit fly).